The sequence spans 135 residues: L-ectoine synthase (135 aa).

Belongs to the ectoine synthase family.

It carries out the reaction (2S)-4-acetamido-2-aminobutanoate = L-ectoine + H2O. The protein operates within amine and polyamine biosynthesis; ectoine biosynthesis; L-ectoine from L-aspartate 4-semialdehyde: step 3/3. In terms of biological role, catalyzes the circularization of gamma-N-acetyl-alpha,gamma-diaminobutyric acid (ADABA) to ectoine (1,4,5,6-tetrahydro-2-methyl-4-pyrimidine carboxylic acid), which is an excellent osmoprotectant. This chain is L-ectoine synthase, found in Hyphomonas neptunium (strain ATCC 15444).